A 49-amino-acid chain; its full sequence is Large ribosomal subunit protein bL33C (49 aa).

Residues 21–49 are disordered; the sequence is KNKRNNPDRVEFKKYCPRDKKSTLHRETK. The segment covering 25–49 has biased composition (basic and acidic residues); that stretch reads NNPDRVEFKKYCPRDKKSTLHRETK.

The protein belongs to the bacterial ribosomal protein bL33 family.

This is Large ribosomal subunit protein bL33C from Bacillus licheniformis (strain ATCC 14580 / DSM 13 / JCM 2505 / CCUG 7422 / NBRC 12200 / NCIMB 9375 / NCTC 10341 / NRRL NRS-1264 / Gibson 46).